We begin with the raw amino-acid sequence, 416 residues long: MVIKKTTPGLMSGTMLIIATVIGGGMFSLPIAMAGIWFPGASIILTLIAIMMLLTGLMLVEVNLHYGGGASFNTFTQDLLGHKWNVVVGIAFGFVLYILTYAYISGSSAVISQTVEKYSGFYLPARLSVIIVSVLVGGIAWYSSLLVGRITTVLIIGKFVAFFATFSGLIWHVEGAKLIDSAAWALPDTQYLPYILMTLPFCIISYGFHGNVPSLVKLYGTQGVKNITRSIFIGTAFALLLYIFWLVVTMGNISRADFSPIIAKGGNIDVFVEAIGGLFTSTSMDLILTFFGNFAVASSLLAATLGLFDYIADLFHFSDDRSGRFKTALVTYLPPAVVCFILPGGFVYAIGYAGLAFTIWSVILPPFLVKAARKRFPTAVYTAPCNNMILNLVIVVGGFVYLTVVLDVFRLLPSFS.

A run of 11 helical transmembrane segments spans residues 13 to 33 (GTMLIIATVIGGGMFSLPIAM), 34 to 54 (AGIWFPGASIILTLIAIMMLL), 86 to 106 (VVVGIAFGFVLYILTYAYISG), 127 to 147 (LSVIIVSVLVGGIAWYSSLLV), 153 to 173 (VLIIGKFVAFFATFSGLIWHV), 192 to 212 (LPYILMTLPFCIISYGFHGNV), 231 to 251 (IFIGTAFALLLYIFWLVVTMG), 260 to 280 (PIIAKGGNIDVFVEAIGGLFT), 286 to 306 (LILTFFGNFAVASSLLAATLG), 337 to 357 (VVCFILPGGFVYAIGYAGLAF), and 389 to 409 (ILNLVIVVGGFVYLTVVLDVF).

The protein belongs to the amino acid/polyamine transporter 2 family. Mtr/TnaB/TyrP permease subfamily.

The protein localises to the cell inner membrane. In Enterobacter agglomerans (Erwinia herbicola), this protein is Tyrosine permease (tutB).